The following is a 564-amino-acid chain: Diacylglycerol kinase epsilon (564 aa).

The helical transmembrane segment at 20-40 threads the bilayer; sequence LVLWTLCSVLLPVFITLWCSL. 2 Phorbol-ester/DAG-type zinc fingers span residues 57–106 and 121–174; these read KHCW…RFPC and PHHW…SEKC. Positions 212–353 constitute a DAGKc domain; the sequence is KQWTPLIILA…LDRWKVQVTN (142 aa).

This sequence belongs to the eukaryotic diacylglycerol kinase family. In terms of tissue distribution, highly expressed in brain and heart. In brain, highly expressed in Purkinje cells of the cerebellum, pyramidal cells of the hippocampus, mitral cells of the olfactory bulb, and neurons of the substantia nigra. Lower expression in neurons of the thalamus, superior olive, and lateral reticular nucleus is also detected. Expressed in platelets.

It localises to the membrane. Its subcellular location is the cytoplasm. The enzyme catalyses a 1,2-diacyl-sn-glycerol + ATP = a 1,2-diacyl-sn-glycero-3-phosphate + ADP + H(+). The catalysed reaction is 1-hexadecanoyl-2-(5Z,8Z,11Z,14Z-eicosatetraenoyl)-sn-glycerol + ATP = 1-hexadecanoyl-2-(5Z,8Z,11Z,14Z-eicosatetraenoyl)-sn-glycero-3-phosphate + ADP + H(+). It catalyses the reaction 1-octadecanoyl-2-(5Z,8Z,11Z,14Z-eicosatetraenoyl)-sn-glycerol + ATP = 1-octadecanoyl-2-(5Z,8Z,11Z,14Z-eicosatetraenoyl)-sn-glycero-3-phosphate + ADP + H(+). It carries out the reaction 1-eicosanoyl-2-(5Z,8Z,11Z,14Z)-eicosatetraenoyl-sn-glycerol + ATP = 1-eicosanoyl-2-(5Z,8Z,11Z,14Z)-eicosatetraenoyl-sn-glycero-3-phosphate + ADP + H(+). The enzyme catalyses 1,2-di-(5Z,8Z,11Z,14Z)-eicosatetraenoyl-sn-glycerol + ATP = 1,2-di-(5Z,8Z,11Z,14Z)-eicosatetraenoyl-sn-glycero-3-phosphate + ADP + H(+). The catalysed reaction is 1-octadecanoyl-2-(9Z,12Z)-octadecadienoyl-sn-glycerol + ATP = 1-octadecanoyl-2-(9Z,12Z-octadecadienoyl)-sn-glycero-3-phosphate + ADP + H(+). It catalyses the reaction 1,2-di-(9Z,12Z-octadecadienoyl)-sn-glycerol + ATP = 1,2-di-(9Z,12Z-octadecadienoyl)-sn-glycero-3-phosphate + ADP + H(+). It carries out the reaction 1,2-di-(9Z-octadecenoyl)-sn-glycerol + ATP = 1,2-di-(9Z-octadecenoyl)-sn-glycero-3-phosphate + ADP + H(+). It participates in lipid metabolism; glycerolipid metabolism. Membrane-bound diacylglycerol kinase that converts diacylglycerol/DAG into phosphatidic acid/phosphatidate/PA and regulates the respective levels of these two bioactive lipids. Thereby, acts as a central switch between the signaling pathways activated by these second messengers with different cellular targets and opposite effects in numerous biological processes. Also plays an important role in the biosynthesis of complex lipids. Displays specificity for diacylglycerol substrates with an arachidonoyl acyl chain at the sn-2 position, with the highest activity toward 1-octadecanoyl-2-(5Z,8Z,11Z,14Z-eicosatetraenoyl)-sn-glycerol the main diacylglycerol intermediate within the phosphatidylinositol turnover cycle. Can also phosphorylate diacylglycerol substrates with a linoleoyl acyl chain at the sn-2 position but much less efficiently. This chain is Diacylglycerol kinase epsilon (Dgke), found in Mus musculus (Mouse).